The following is a 157-amino-acid chain: SsrA-binding protein (157 aa).

This sequence belongs to the SmpB family.

It is found in the cytoplasm. Its function is as follows. Required for rescue of stalled ribosomes mediated by trans-translation. Binds to transfer-messenger RNA (tmRNA), required for stable association of tmRNA with ribosomes. tmRNA and SmpB together mimic tRNA shape, replacing the anticodon stem-loop with SmpB. tmRNA is encoded by the ssrA gene; the 2 termini fold to resemble tRNA(Ala) and it encodes a 'tag peptide', a short internal open reading frame. During trans-translation Ala-aminoacylated tmRNA acts like a tRNA, entering the A-site of stalled ribosomes, displacing the stalled mRNA. The ribosome then switches to translate the ORF on the tmRNA; the nascent peptide is terminated with the 'tag peptide' encoded by the tmRNA and targeted for degradation. The ribosome is freed to recommence translation, which seems to be the essential function of trans-translation. The polypeptide is SsrA-binding protein (Chromohalobacter salexigens (strain ATCC BAA-138 / DSM 3043 / CIP 106854 / NCIMB 13768 / 1H11)).